Here is a 222-residue protein sequence, read N- to C-terminus: Latexin (222 aa).

In terms of domain architecture, Cystatin LXN-type 1 spans 1–97 (MEIPPTHYAA…NFTFEGEIGK (97 aa)). N6-acetyllysine is present on lysine 55. The interval 98–117 (NPDEEDNTFYQSLMSLKRPL) is alpha-helical linker. The region spanning 118–222 (EAQDIPDNFG…SRLPKEGQAE (105 aa)) is the Cystatin LXN-type 2 domain.

The protein belongs to the protease inhibitor I47 (latexin) family. In terms of tissue distribution, highly enriched in macrophages.

The protein localises to the cytoplasm. Functionally, hardly reversible, non-competitive, and potent inhibitor of CPA1, CPA2 and CPA4. May play a role in inflammation. In Mus musculus (Mouse), this protein is Latexin (Lxn).